We begin with the raw amino-acid sequence, 444 residues long: Maintenance of mitochondrial morphology protein 1 (444 aa).

Positions 1–16 (MKGVENTLSQSESVNR) are enriched in polar residues. Residues 1-20 (MKGVENTLSQSESVNRGYNG) form a disordered region. The Lumenal segment spans residues 1–107 (MKGVENTLSQ…TFSSRSFAEG (107 aa)). Residues 108-128 (LVVGQLSVIVVLIFFIKFFIF) form a helical membrane-spanning segment. The Cytoplasmic segment spans residues 129–444 (SDGPAKTGGG…QEEDPSRAPE (316 aa)). The disordered stretch occupies residues 136–157 (GGGGGSSAESRSSGFTGSPLTS). The span at 142–157 (SAESRSSGFTGSPLTS) shows a compositional bias: low complexity. Positions 204-418 (SPESLDWFNV…EPRFQFVKLP (215 aa)) constitute an SMP-LTD domain. A disordered region spans residues 425-444 (KNTREEKSDMQEEDPSRAPE). Over residues 426–444 (NTREEKSDMQEEDPSRAPE) the composition is skewed to basic and acidic residues.

It belongs to the MMM1 family. In terms of assembly, homodimer. Component of the ER-mitochondria encounter structure (ERMES) or MDM complex, composed of MMM1, MDM10, MDM12 and MDM34. An MMM1 homodimer associates with one molecule of MDM12 on each side in a pairwise head-to-tail manner, and the SMP-LTD domains of MMM1 and MDM12 generate a continuous hydrophobic tunnel for phospholipid trafficking.

Its subcellular location is the endoplasmic reticulum membrane. Its function is as follows. Component of the ERMES/MDM complex, which serves as a molecular tether to connect the endoplasmic reticulum (ER) and mitochondria. Components of this complex are involved in the control of mitochondrial shape and protein biogenesis, and function in nonvesicular lipid trafficking between the ER and mitochondria. The MDM12-MMM1 subcomplex functions in the major beta-barrel assembly pathway that is responsible for biogenesis of all outer membrane beta-barrel proteins, and acts in a late step after the SAM complex. The MDM10-MDM12-MMM1 subcomplex further acts in the TOM40-specific pathway after the action of the MDM12-MMM1 complex. Essential for establishing and maintaining the structure of mitochondria and maintenance of mtDNA nucleoids. The chain is Maintenance of mitochondrial morphology protein 1 from Eremothecium gossypii (strain ATCC 10895 / CBS 109.51 / FGSC 9923 / NRRL Y-1056) (Yeast).